A 666-amino-acid polypeptide reads, in one-letter code: MKTIHKLFLGLCLPATLGPLLGIVVTNTDQSIKFTSKSNSINKNNQNKELALLRDNLMNEAKVDEPLSFEKRFENFKNKYSDIHSLNNSVFSLHDVYDLLGGFKQSLTTFFDEVIAQQQKIKDADKIFPSTKDNPPKEENPNVLDTLANYQGAGFFPSLGKNGFNLPEAVFQNFTDFRINDYKIKNFNVDLVSENDIIKHDKVRYAFEVKFNIALVLSINKSNVDFDFDFILKTDNFSDIENFNEIFNRKPALQFRFYTKINVHKLSFNGSDSTYIANILLQDQFNLLEIDLNKSIYALDLENAKERFDKEFVQPLYQKRREAKLAWEEEQRRIAEEQRRQEEERARILKELKEKAEKDKRVKEAQNNLQKALGNLDTFFNFFSSGQDRVLLGFDPNKYNVQTREGLFKALQISYSNFKTWTFYISLLGWKEGSVKLLKKPIWNALRDDKAFQYAFGLGPNTSEQQLGRVTLPGYGYEGIRMSDWLRWALGYYTSFTLSPPKNVEANLIGDANDKKHIWISPHTFKLNREYGDGERFKGKAYRFKLSISFELEGHLTAHWWTIAFRGSIPGSWSGKLRVTHEFDGDVPYYRLHTTPPQYRLTDDMKLLFVPHSIQRVTAVGNESINGLLRSQNLHNLERQSYEATAPIDLISYMLYAISDKKPPQK.

It belongs to the MG032/MG096/MG288 family.

This is an uncharacterized protein from Mycoplasma genitalium (strain ATCC 33530 / DSM 19775 / NCTC 10195 / G37) (Mycoplasmoides genitalium).